A 288-amino-acid chain; its full sequence is GDSL esterase/lipase At3g43550 (288 aa).

An N-terminal signal peptide occupies residues 1–19 (MKLQIIWLALVLIAVETYA). The N-linked (GlcNAc...) asparagine glycan is linked to N25. S37 (nucleophile) is an active-site residue.

This sequence belongs to the 'GDSL' lipolytic enzyme family.

It is found in the secreted. This chain is GDSL esterase/lipase At3g43550, found in Arabidopsis thaliana (Mouse-ear cress).